Here is a 297-residue protein sequence, read N- to C-terminus: tRNA(Ile)-lysidine synthase (297 aa).

16-21 is a binding site for ATP; that stretch reads SGGSDS.

It belongs to the tRNA(Ile)-lysidine synthase family.

Its subcellular location is the cytoplasm. It catalyses the reaction cytidine(34) in tRNA(Ile2) + L-lysine + ATP = lysidine(34) in tRNA(Ile2) + AMP + diphosphate + H(+). Ligates lysine onto the cytidine present at position 34 of the AUA codon-specific tRNA(Ile) that contains the anticodon CAU, in an ATP-dependent manner. Cytidine is converted to lysidine, thus changing the amino acid specificity of the tRNA from methionine to isoleucine. This Mesomycoplasma hyopneumoniae (strain 232) (Mycoplasma hyopneumoniae) protein is tRNA(Ile)-lysidine synthase.